A 360-amino-acid polypeptide reads, in one-letter code: Peptide chain release factor 1 (360 aa).

An N5-methylglutamine modification is found at glutamine 237.

It belongs to the prokaryotic/mitochondrial release factor family. Methylated by PrmC. Methylation increases the termination efficiency of RF1.

The protein resides in the cytoplasm. Peptide chain release factor 1 directs the termination of translation in response to the peptide chain termination codons UAG and UAA. This Pseudomonas entomophila (strain L48) protein is Peptide chain release factor 1.